Reading from the N-terminus, the 395-residue chain is Acid ceramidase (395 aa).

Residues 1 to 21 form the signal peptide; the sequence is MPGRSRVALVLLAAAVSCAVA. Cysteine 31 and cysteine 340 are oxidised to a cystine. The Nucleophile role is filled by cysteine 143. Asparagine 195, asparagine 259, asparagine 286, and asparagine 342 each carry an N-linked (GlcNAc...) asparagine glycan. Cysteine 388 and cysteine 392 are joined by a disulfide.

Belongs to the acid ceramidase family. In terms of assembly, heterodimer; disulfide-linked. The heterodimer is composed of the disulfide-linked alpha and beta chains produced by autocatalytic cleavage of the precursor. Post-translationally, N-glycosylated. In terms of processing, proteolytically cleaved into two chains alpha and beta that remain associated via a disulfide bond. Cleavage gives rise to a conformation change that activates the enzyme. The same catalytic Cys residue mediates the autoproteolytic cleavage and subsequent hydrolysis of lipid substrates. The beta chain may undergo an additional C-terminal processing.

It localises to the lysosome. The protein resides in the secreted. It carries out the reaction an N-acylsphing-4-enine + H2O = sphing-4-enine + a fatty acid. The catalysed reaction is N-dodecanoylsphing-4-enine + H2O = dodecanoate + sphing-4-enine. It catalyses the reaction N-tetradecanoylsphing-4-enine + H2O = tetradecanoate + sphing-4-enine. The enzyme catalyses N-hexadecanoylsphing-4-enine + H2O = sphing-4-enine + hexadecanoate. It carries out the reaction N-octadecanoylsphing-4-enine + H2O = sphing-4-enine + octadecanoate. The catalysed reaction is N-dodecanoyl-(4R)-hydroxysphinganine + H2O = (4R)-hydroxysphinganine + dodecanoate. It catalyses the reaction N-(dodecanoyl)-sphinganine + H2O = dodecanoate + sphinganine. The enzyme catalyses N-(acetyl)-sphing-4-enine + H2O = sphing-4-enine + acetate. It carries out the reaction N-(hexanoyl)sphing-4-enine + H2O = hexanoate + sphing-4-enine. The catalysed reaction is N-octanoylsphing-4-enine + H2O = octanoate + sphing-4-enine. It catalyses the reaction N-(9Z-octadecenoyl)-sphing-4-enine + H2O = sphing-4-enine + (9Z)-octadecenoate. The enzyme catalyses N-dodecanoylethanolamine + H2O = dodecanoate + ethanolamine. The protein operates within lipid metabolism; sphingolipid metabolism. Functionally, lysosomal ceramidase that hydrolyzes sphingolipid ceramides into sphingosine and free fatty acids at acidic pH. Ceramides, sphingosine, and its phosphorylated form sphingosine-1-phosphate are bioactive lipids that mediate cellular signaling pathways regulating several biological processes including cell proliferation, apoptosis and differentiation. Has a higher catalytic efficiency towards C12-ceramides versus other ceramides. Also catalyzes the reverse reaction allowing the synthesis of ceramides from fatty acids and sphingosine. For the reverse synthetic reaction, the natural sphingosine D-erythro isomer is more efficiently utilized as a substrate compared to D-erythro-dihydrosphingosine and D-erythro-phytosphingosine, while the fatty acids with chain lengths of 12 or 14 carbons are the most efficiently used. Also has an N-acylethanolamine hydrolase activity. By regulating the levels of ceramides, sphingosine and sphingosine-1-phosphate in the epidermis, mediates the calcium-induced differentiation of epidermal keratinocytes. Also indirectly regulates tumor necrosis factor/TNF-induced apoptosis. By regulating the intracellular balance between ceramides and sphingosine, in adrenocortical cells, probably also acts as a regulator of steroidogenesis. The protein is Acid ceramidase of Pan troglodytes (Chimpanzee).